Consider the following 203-residue polypeptide: MSAIERITKAAHLIDMNDIIREGNPTLRAIAEKVTFPLSDQEIILGEKMMQFLKHSQDPVMAEKMGLRGGVGLAAPQLDISKRIIAVLVPNIVEEGETPQEAYDLEAIMYNPKIVSHSVQDAALGEGEXCLSVDRNVPGYVVRHARVTVDYFDKDGEKHRIKLKGYNSIVVQHEIDHINGIMFYDRINEKDPFAVKDGLLILE.

C130 and H173 together coordinate Fe cation. E174 is a catalytic residue. H177 contributes to the Fe cation binding site.

It belongs to the polypeptide deformylase family. Requires Fe(2+) as cofactor.

It carries out the reaction N-terminal N-formyl-L-methionyl-[peptide] + H2O = N-terminal L-methionyl-[peptide] + formate. Its function is as follows. Removes the formyl group from the N-terminal Met of newly synthesized proteins. Requires at least a dipeptide for an efficient rate of reaction. N-terminal L-methionine is a prerequisite for activity but the enzyme has broad specificity at other positions. This chain is Peptide deformylase, found in Streptococcus pneumoniae serotype 19F (strain G54).